The primary structure comprises 432 residues: 3-phosphoshikimate 1-carboxyvinyltransferase (432 aa).

Positions 23, 24, and 28 each coordinate 3-phosphoshikimate. Lys23 is a binding site for phosphoenolpyruvate. 2 residues coordinate phosphoenolpyruvate: Gly95 and Arg123. Positions 167, 169, 317, and 344 each coordinate 3-phosphoshikimate. Gln169 is a phosphoenolpyruvate binding site. Asp317 functions as the Proton acceptor in the catalytic mechanism. 2 residues coordinate phosphoenolpyruvate: Arg348 and Arg390.

Belongs to the EPSP synthase family. In terms of assembly, monomer.

It is found in the cytoplasm. The catalysed reaction is 3-phosphoshikimate + phosphoenolpyruvate = 5-O-(1-carboxyvinyl)-3-phosphoshikimate + phosphate. Its pathway is metabolic intermediate biosynthesis; chorismate biosynthesis; chorismate from D-erythrose 4-phosphate and phosphoenolpyruvate: step 6/7. Its function is as follows. Catalyzes the transfer of the enolpyruvyl moiety of phosphoenolpyruvate (PEP) to the 5-hydroxyl of shikimate-3-phosphate (S3P) to produce enolpyruvyl shikimate-3-phosphate and inorganic phosphate. This chain is 3-phosphoshikimate 1-carboxyvinyltransferase, found in Staphylococcus haemolyticus (strain JCSC1435).